The sequence spans 754 residues: DNA topoisomerase 4 subunit A (754 aa).

Residues 38–501 form the Topo IIA-type catalytic domain; it reads LPHIGDGLKP…EARALSETEL (464 aa). Tyr127 acts as the O-(5'-phospho-DNA)-tyrosine intermediate in catalysis.

It belongs to the type II topoisomerase GyrA/ParC subunit family. ParC type 1 subfamily. As to quaternary structure, heterotetramer composed of ParC and ParE.

The protein localises to the cell membrane. The catalysed reaction is ATP-dependent breakage, passage and rejoining of double-stranded DNA.. Its function is as follows. Topoisomerase IV is essential for chromosome segregation. It relaxes supercoiled DNA. Performs the decatenation events required during the replication of a circular DNA molecule. The protein is DNA topoisomerase 4 subunit A of Pseudomonas aeruginosa (strain ATCC 15692 / DSM 22644 / CIP 104116 / JCM 14847 / LMG 12228 / 1C / PRS 101 / PAO1).